A 450-amino-acid polypeptide reads, in one-letter code: Envelope glycoprotein M (450 aa).

The Intravirion segment spans residues 1–31 (MARRGAAVAEEPLLPSSGIVGIGPIEGINWR). Residues 32–52 (TWLVQVFCFALTTSVLFITLV) form a helical membrane-spanning segment. Residues 53–101 (TASLPQTGYPCFYGSLVDYTQKNHSVVDGVWMRQIAGGVAPTLFLETTS) are Virion surface-facing. The chain crosses the membrane as a helical span at residues 102–122 (LVAFLYYTTLVLVAISFYLII). At 123–153 (SAVLVRRYARGKECTAVAGCTRPTTTLIASH) the chain is on the intravirion side. The helical transmembrane segment at 154-174 (VTLVLGTLATWLLQVVILLLS) threads the bilayer. Over 175-178 (HKQA) the chain is Virion surface. Residues 179–199 (VLGAAVYVVHFVSLVFFCMSF) form a helical membrane-spanning segment. The Intravirion segment spans residues 200–236 (SGLGTASAQYSSNLRILKTNLPALHKMAGPGRAVMTN). A helical transmembrane segment spans residues 237–257 (LGMGMLGISLPILSLMLGIIL). The Virion surface portion of the chain corresponds to 258–270 (ANSFHITLWQTVT). The helical transmembrane segment at 271–291 (VAVGVFVALGLMFLIIVELIV) threads the bilayer. Over 292–294 (SHY) the chain is Intravirion. The chain crosses the membrane as a helical span at residues 295–315 (VHVLVGPALAVLVASSTLAVA). At 316–334 (THSYFVHFHAMVSVQAPNL) the chain is on the virion surface side. A helical transmembrane segment spans residues 335 to 355 (ATASKAIVGIMAVISIIMLVV). At 356-450 (RLVRAIMFHK…PERSHRREYR (95 aa)) the chain is on the intravirion side.

It belongs to the herpesviridae glycoprotein M family. Interacts (via N-terminus) with gN (via N-terminus). The gM-gN heterodimer forms the gCII complex.

The protein localises to the virion membrane. It localises to the host Golgi apparatus. Its subcellular location is the host trans-Golgi network. It is found in the host endosome membrane. The protein resides in the host nucleus inner membrane. Envelope glycoprotein important for virion assembly and egress. Plays a role in the correct incorporation of gH-gL into virion membrane. Directs the glycoprotein N (gN) to the host trans-Golgi network. The chain is Envelope glycoprotein M from Equus caballus (Horse).